The sequence spans 245 residues: tRNA (guanine-N(1)-)-methyltransferase (245 aa).

S-adenosyl-L-methionine is bound by residues glycine 111 and 131–136 (IGDYVL).

The protein belongs to the RNA methyltransferase TrmD family. Homodimer.

The protein localises to the cytoplasm. The enzyme catalyses guanosine(37) in tRNA + S-adenosyl-L-methionine = N(1)-methylguanosine(37) in tRNA + S-adenosyl-L-homocysteine + H(+). Its function is as follows. Specifically methylates guanosine-37 in various tRNAs. The protein is tRNA (guanine-N(1)-)-methyltransferase of Staphylococcus carnosus (strain TM300).